A 92-amino-acid polypeptide reads, in one-letter code: Small ribosomal subunit protein uS19 (92 aa).

It belongs to the universal ribosomal protein uS19 family.

Functionally, protein S19 forms a complex with S13 that binds strongly to the 16S ribosomal RNA. This is Small ribosomal subunit protein uS19 from Rickettsia africae (strain ESF-5).